Reading from the N-terminus, the 269-residue chain is Glutamate racemase (269 aa).

Residues 11–12 (DS) and 43–44 (YG) contribute to the substrate site. The Proton donor/acceptor role is filled by C74. Position 75–76 (75–76 (NT)) interacts with substrate. The active-site Proton donor/acceptor is the C185. Position 186-187 (186-187 (TH)) interacts with substrate.

The protein belongs to the aspartate/glutamate racemases family.

It carries out the reaction L-glutamate = D-glutamate. The protein operates within cell wall biogenesis; peptidoglycan biosynthesis. Functionally, provides the (R)-glutamate required for cell wall biosynthesis. The chain is Glutamate racemase from Bacillus cereus (strain ATCC 10987 / NRS 248).